Consider the following 270-residue polypeptide: UPF0354 protein BT9727_4425 (270 aa).

The protein belongs to the UPF0354 family.

In Bacillus thuringiensis subsp. konkukian (strain 97-27), this protein is UPF0354 protein BT9727_4425.